The primary structure comprises 305 residues: Large ribosomal subunit protein uL2m (305 aa).

Residues 1-60 (MALCALTRALRSLNLAPPTVAAPAPSLFPAAQMMNNGLLQQPSALMLLPCRPVLTSVALN) constitute a mitochondrion transit peptide. The tract at residues 264–283 (RWLGKRPNSGRWHRKGGWAG) is disordered. A compositionally biased stretch (basic residues) spans 274–283 (RWHRKGGWAG).

Belongs to the universal ribosomal protein uL2 family. As to quaternary structure, component of the mitochondrial large ribosomal subunit (mt-LSU). Mature mammalian 55S mitochondrial ribosomes consist of a small (28S) and a large (39S) subunit. The 28S small subunit contains a 12S ribosomal RNA (12S mt-rRNA) and 30 different proteins. The 39S large subunit contains a 16S rRNA (16S mt-rRNA), a copy of mitochondrial valine transfer RNA (mt-tRNA(Val)), which plays an integral structural role, and 52 different proteins.

Its subcellular location is the mitochondrion. The polypeptide is Large ribosomal subunit protein uL2m (MRPL2) (Homo sapiens (Human)).